Consider the following 311-residue polypeptide: tRNA dimethylallyltransferase (311 aa).

12-19 (GPTASGKT) provides a ligand contact to ATP. 14–19 (TASGKT) is a substrate binding site. Interaction with substrate tRNA stretches follow at residues 37-40 (DSAL), 161-165 (QRINR), and 241-246 (RCVGYR).

The protein belongs to the IPP transferase family. In terms of assembly, monomer. Requires Mg(2+) as cofactor.

It carries out the reaction adenosine(37) in tRNA + dimethylallyl diphosphate = N(6)-dimethylallyladenosine(37) in tRNA + diphosphate. Catalyzes the transfer of a dimethylallyl group onto the adenine at position 37 in tRNAs that read codons beginning with uridine, leading to the formation of N6-(dimethylallyl)adenosine (i(6)A). This chain is tRNA dimethylallyltransferase, found in Histophilus somni (strain 2336) (Haemophilus somnus).